The sequence spans 197 residues: NADH-quinone oxidoreductase subunit C (197 aa).

This sequence belongs to the complex I 30 kDa subunit family. In terms of assembly, NDH-1 is composed of 14 different subunits. Subunits NuoB, C, D, E, F, and G constitute the peripheral sector of the complex.

It is found in the cell inner membrane. The enzyme catalyses a quinone + NADH + 5 H(+)(in) = a quinol + NAD(+) + 4 H(+)(out). Its function is as follows. NDH-1 shuttles electrons from NADH, via FMN and iron-sulfur (Fe-S) centers, to quinones in the respiratory chain. The immediate electron acceptor for the enzyme in this species is believed to be ubiquinone. Couples the redox reaction to proton translocation (for every two electrons transferred, four hydrogen ions are translocated across the cytoplasmic membrane), and thus conserves the redox energy in a proton gradient. This chain is NADH-quinone oxidoreductase subunit C, found in Caulobacter vibrioides (strain ATCC 19089 / CIP 103742 / CB 15) (Caulobacter crescentus).